Reading from the N-terminus, the 141-residue chain is ATP synthase epsilon chain (141 aa).

This sequence belongs to the ATPase epsilon chain family. F-type ATPases have 2 components, CF(1) - the catalytic core - and CF(0) - the membrane proton channel. CF(1) has five subunits: alpha(3), beta(3), gamma(1), delta(1), epsilon(1). CF(0) has three main subunits: a, b and c.

The protein resides in the cell inner membrane. In terms of biological role, produces ATP from ADP in the presence of a proton gradient across the membrane. In Paraburkholderia phytofirmans (strain DSM 17436 / LMG 22146 / PsJN) (Burkholderia phytofirmans), this protein is ATP synthase epsilon chain.